The sequence spans 550 residues: Membrane-bound alkaline phosphatase (550 aa).

The first 39 residues, 1-39 (MSTWWLVVVAAAAAAGLVRAEDRYHPERLAAGEASAATR), serve as a signal peptide directing secretion. Asp83 lines the Mg(2+) pocket. Asp83 contacts Zn(2+). Residue Ser133 is the Phosphoserine intermediate of the active site. The Mg(2+) site is built by His196, Ser198, and Glu356. Residues Asp361, His365, Asp402, His403, and His479 each coordinate Zn(2+). Ser524 carries GPI-anchor amidated serine lipidation. Residues 525–550 (AATVPTAALLSLLLAAFITLRHQCFL) constitute a propeptide, removed in mature form.

This sequence belongs to the alkaline phosphatase family. Mg(2+) is required as a cofactor. The cofactor is Zn(2+). In terms of tissue distribution, midgut.

It is found in the cell membrane. It catalyses the reaction a phosphate monoester + H2O = an alcohol + phosphate. This is Membrane-bound alkaline phosphatase (Alp-m) from Bombyx mori (Silk moth).